Reading from the N-terminus, the 377-residue chain is 1-deoxy-D-xylulose 5-phosphate reductoisomerase (377 aa).

The NADPH site is built by Thr-20, Gly-21, Ile-23, Asn-46, and Asn-115. Lys-116 lines the 1-deoxy-D-xylulose 5-phosphate pocket. Residue Glu-117 coordinates NADPH. Asp-141 is a binding site for Mn(2+). 4 residues coordinate 1-deoxy-D-xylulose 5-phosphate: Ser-142, Glu-143, Ser-166, and His-189. Glu-143 contacts Mn(2+). Gly-195 is a binding site for NADPH. Residues Ser-202, Asn-207, Lys-208, and Glu-211 each contribute to the 1-deoxy-D-xylulose 5-phosphate site. A Mn(2+)-binding site is contributed by Glu-211.

It belongs to the DXR family. The cofactor is Mg(2+). Mn(2+) is required as a cofactor.

The catalysed reaction is 2-C-methyl-D-erythritol 4-phosphate + NADP(+) = 1-deoxy-D-xylulose 5-phosphate + NADPH + H(+). It functions in the pathway isoprenoid biosynthesis; isopentenyl diphosphate biosynthesis via DXP pathway; isopentenyl diphosphate from 1-deoxy-D-xylulose 5-phosphate: step 1/6. In terms of biological role, catalyzes the NADPH-dependent rearrangement and reduction of 1-deoxy-D-xylulose-5-phosphate (DXP) to 2-C-methyl-D-erythritol 4-phosphate (MEP). This is 1-deoxy-D-xylulose 5-phosphate reductoisomerase from Malacoplasma penetrans (strain HF-2) (Mycoplasma penetrans).